The primary structure comprises 336 residues: Palmitoyltransferase PFA3 (336 aa).

The Cytoplasmic segment spans residues 1–6 (MNDRLS). The chain crosses the membrane as a helical span at residues 7–29 (LTSLFPRCLTTCLYIWTAYITLT). At 30–37 (RIHQIPRW) the chain is on the vacuolar side. The helical transmembrane segment at 38–58 (FLALTIVPTLAVALYTYYKVI) threads the bilayer. The Cytoplasmic portion of the chain corresponds to 59-147 (ARGPGSPLDF…AECTGFRNQK (89 aa)). One can recognise a DHHC domain in the interval 104–154 (RVCQVCHVWKPDRCHHCSSCDVCILKMDHHCPWFAECTGFRNQKFFIQFLM). A helical membrane pass occupies residues 148–168 (FFIQFLMYTTLYAFLVLIYTC). Residues 169–188 (YELGTWFNSGSFNRELIDFH) lie on the Vacuolar side of the membrane. A helical membrane pass occupies residues 189-209 (LLGVALLAVAVFISVLAFTCF). Over 210–336 (SIYQVCKNQT…RASVEIIDAN (127 aa)) the chain is Cytoplasmic.

It belongs to the DHHC palmitoyltransferase family. PFA3 subfamily. In terms of processing, autopalmitoylated.

Its subcellular location is the vacuole membrane. The catalysed reaction is L-cysteinyl-[protein] + hexadecanoyl-CoA = S-hexadecanoyl-L-cysteinyl-[protein] + CoA. Its function is as follows. Palmitoyltransferase specific for VAC8. Palmitoylates VAC8 at one or more of its N-terminal cysteine residues, which is required for its proper membrane localization. In Saccharomyces cerevisiae (strain ATCC 204508 / S288c) (Baker's yeast), this protein is Palmitoyltransferase PFA3 (PFA3).